A 78-amino-acid polypeptide reads, in one-letter code: Large ribosomal subunit protein bL31 (78 aa).

Belongs to the bacterial ribosomal protein bL31 family. Type A subfamily. In terms of assembly, part of the 50S ribosomal subunit.

Binds the 23S rRNA. The polypeptide is Large ribosomal subunit protein bL31 (rpmE) (Rickettsia typhi (strain ATCC VR-144 / Wilmington)).